The sequence spans 396 residues: MTINPVSRKVAWLRVVTLAIAAFIFNTTEFVPVGLLSDIAESFHMQTAQVGIMLTIYAWVVAVMSLPFMLLTSQMERRKLLICLFVLFIASHVLSFLAWNFTVLVISRIGIAFAHAIFWSITASLAIRLAPAGKRAQALSLIATGTALAMVLGLPIGRVVGQYFGWRTTFFAIGMGALITLLCLIKLLPKLPSEHSGSLKSLPLLFRRPALMSLYVLTVVVVTAHYTAYSYIEPFVQNVAGLSANFATVLLLILGGAGIIGSLVFGKLGNRHASSLVSIAIALLVVCLLLLLPAADSEAHLAILSIFWGIAIMVIGLGMQVKVLALAPDATDVAMALFSGIFNIGIGAGALVGNQVSLHWSMSAIGYIGDIPACAALVWAVLIFRKWPVTLEEQPH.

The next 12 helical transmembrane spans lie at 15-35 (VVTL…PVGL), 50-70 (VGIM…PFML), 81-101 (LICL…AWNF), 103-123 (VLVI…SITA), 136-156 (AQAL…GLPI), 169-189 (TFFA…KLLP), 209-229 (PALM…YTAY), 246-266 (FATV…LVFG), 275-295 (SLVS…LPAA), 301-321 (LAIL…GMQV), 333-353 (VAMA…ALVG), and 364-384 (AIGY…VLIF).

This sequence belongs to the major facilitator superfamily. SotB (TC 2.A.1.2) family.

It is found in the cell inner membrane. Involved in the efflux of sugars. The physiological role may be the reduction of the intracellular concentration of toxic sugars or sugar metabolites. The sequence is that of Probable sugar efflux transporter from Salmonella paratyphi C (strain RKS4594).